Here is a 335-residue protein sequence, read N- to C-terminus: 4-hydroxy-3-methylbut-2-enyl diphosphate reductase (335 aa).

Cysteine 21 is a [4Fe-4S] cluster binding site. (2E)-4-hydroxy-3-methylbut-2-enyl diphosphate contacts are provided by histidine 50 and histidine 86. 2 residues coordinate dimethylallyl diphosphate: histidine 50 and histidine 86. Isopentenyl diphosphate-binding residues include histidine 50 and histidine 86. A [4Fe-4S] cluster-binding site is contributed by cysteine 108. Histidine 136 is a binding site for (2E)-4-hydroxy-3-methylbut-2-enyl diphosphate. Residue histidine 136 coordinates dimethylallyl diphosphate. Residue histidine 136 participates in isopentenyl diphosphate binding. The active-site Proton donor is glutamate 138. Position 177 (threonine 177) interacts with (2E)-4-hydroxy-3-methylbut-2-enyl diphosphate. Residue cysteine 207 coordinates [4Fe-4S] cluster. Residues serine 235, serine 236, asparagine 237, and serine 280 each coordinate (2E)-4-hydroxy-3-methylbut-2-enyl diphosphate. Residues serine 235, serine 236, asparagine 237, and serine 280 each coordinate dimethylallyl diphosphate. Isopentenyl diphosphate is bound by residues serine 235, serine 236, asparagine 237, and serine 280.

It belongs to the IspH family. [4Fe-4S] cluster is required as a cofactor.

It carries out the reaction isopentenyl diphosphate + 2 oxidized [2Fe-2S]-[ferredoxin] + H2O = (2E)-4-hydroxy-3-methylbut-2-enyl diphosphate + 2 reduced [2Fe-2S]-[ferredoxin] + 2 H(+). The catalysed reaction is dimethylallyl diphosphate + 2 oxidized [2Fe-2S]-[ferredoxin] + H2O = (2E)-4-hydroxy-3-methylbut-2-enyl diphosphate + 2 reduced [2Fe-2S]-[ferredoxin] + 2 H(+). The protein operates within isoprenoid biosynthesis; dimethylallyl diphosphate biosynthesis; dimethylallyl diphosphate from (2E)-4-hydroxy-3-methylbutenyl diphosphate: step 1/1. Its pathway is isoprenoid biosynthesis; isopentenyl diphosphate biosynthesis via DXP pathway; isopentenyl diphosphate from 1-deoxy-D-xylulose 5-phosphate: step 6/6. Its function is as follows. Catalyzes the conversion of 1-hydroxy-2-methyl-2-(E)-butenyl 4-diphosphate (HMBPP) into a mixture of isopentenyl diphosphate (IPP) and dimethylallyl diphosphate (DMAPP). Acts in the terminal step of the DOXP/MEP pathway for isoprenoid precursor biosynthesis. In Rhizobium rhizogenes (strain K84 / ATCC BAA-868) (Agrobacterium radiobacter), this protein is 4-hydroxy-3-methylbut-2-enyl diphosphate reductase.